The sequence spans 157 residues: MSAPFEERSGVVPCGTPWGQWYQTLEEVFIEVQVPPGTRAQDIQCGLQSRHVALSVGGREILKGKLFDSTIADEGTWTLEDRKMVRIVLTKTKRDAANCWTSLLESEYAADPWVQDQMQRKLTLERFQKENPGFDFSGAEISGNYTKGGPDFSNLEK.

Ser-2 is subject to N-acetylserine. One can recognise a CS domain in the interval 14–104 (CGTPWGQWYQ…DAANCWTSLL (91 aa)). The disordered stretch occupies residues 134–157 (FDFSGAEISGNYTKGGPDFSNLEK). Ser-142 is modified (phosphoserine). Residue Tyr-145 is modified to Phosphotyrosine.

Interacts with LIS1.

It localises to the chromosome. The protein localises to the centromere. Its subcellular location is the kinetochore. It is found in the cytoplasm. The protein resides in the cytoskeleton. It localises to the microtubule organizing center. The protein localises to the centrosome. Its subcellular location is the spindle pole. May regulate the LIS1/dynein pathway by stabilizing LIS1 with Hsp90 chaperone. This is NudC domain-containing protein 2 (NUDCD2) from Homo sapiens (Human).